The primary structure comprises 400 residues: Nicotinate phosphoribosyltransferase (400 aa).

A Phosphohistidine; by autocatalysis modification is found at His220.

This sequence belongs to the NAPRTase family. Post-translationally, transiently phosphorylated on a His residue during the reaction cycle. Phosphorylation strongly increases the affinity for substrates and increases the rate of nicotinate D-ribonucleotide production. Dephosphorylation regenerates the low-affinity form of the enzyme, leading to product release.

It carries out the reaction nicotinate + 5-phospho-alpha-D-ribose 1-diphosphate + ATP + H2O = nicotinate beta-D-ribonucleotide + ADP + phosphate + diphosphate. The protein operates within cofactor biosynthesis; NAD(+) biosynthesis; nicotinate D-ribonucleotide from nicotinate: step 1/1. Functionally, catalyzes the synthesis of beta-nicotinate D-ribonucleotide from nicotinate and 5-phospho-D-ribose 1-phosphate at the expense of ATP. The sequence is that of Nicotinate phosphoribosyltransferase from Salmonella heidelberg (strain SL476).